A 642-amino-acid polypeptide reads, in one-letter code: Threonine--tRNA ligase (642 aa).

One can recognise a TGS domain in the interval 1-61 (MPIITLPDGS…SEDANLEIIT (61 aa)). Positions 243 to 534 (DHRKIGKALD…ITEEYAGFFP (292 aa)) are catalytic. Residues Cys-334, His-385, and His-511 each contribute to the Zn(2+) site.

The protein belongs to the class-II aminoacyl-tRNA synthetase family. Homodimer. Zn(2+) serves as cofactor.

It is found in the cytoplasm. It catalyses the reaction tRNA(Thr) + L-threonine + ATP = L-threonyl-tRNA(Thr) + AMP + diphosphate + H(+). Its function is as follows. Catalyzes the attachment of threonine to tRNA(Thr) in a two-step reaction: L-threonine is first activated by ATP to form Thr-AMP and then transferred to the acceptor end of tRNA(Thr). Also edits incorrectly charged L-seryl-tRNA(Thr). This is Threonine--tRNA ligase from Histophilus somni (strain 129Pt) (Haemophilus somnus).